The primary structure comprises 341 residues: Muscleblind-like protein 1 (341 aa).

Thr6 is modified (phosphothreonine). 4 C3H1-type zinc fingers span residues 13 to 41, 47 to 73, 178 to 206, and 214 to 240; these read WLTL…HPSK, NGRV…HPPP, TDRL…HPAD, and DNTV…HPPA.

Belongs to the muscleblind family. In terms of assembly, interacts with DDX1 and YBX1. Interacts with HNRNPH1; the interaction in RNA-independent. Interacts with RBPMS; the interaction allows cooperative assembly of RNA-bound stable cell-specific alternative splicing regulatory complexes. Highly expressed in cardiac and skeletal muscle. Weakly expressed in heart and eye (at protein level).

The protein localises to the nucleus. Its subcellular location is the cytoplasm. It localises to the cytoplasmic granule. Mediates pre-mRNA alternative splicing regulation. Acts either as activator or repressor of splicing on specific pre-mRNA targets. Inhibits cardiac troponin-T (TNNT2) pre-mRNA exon inclusion but induces insulin receptor (IR) pre-mRNA exon inclusion in muscle. Antagonizes the alternative splicing activity pattern of CELF proteins. Regulates the TNNT2 exon 5 skipping through competition with U2AF2. Inhibits the formation of the spliceosome A complex on intron 4 of TNNT2 pre-mRNA. Binds to the stem-loop structure within the polypyrimidine tract of TNNT2 intron 4 during spliceosome assembly. Binds to the 5'-YGCU(U/G)Y-3'consensus sequence. Binds to the IR RNA. Binds to CUG triplet repeat expansion in myotonic dystrophy muscle cells by sequestering the target RNAs. Together with RNA binding proteins RBPMS and RBFOX2, activates vascular smooth muscle cells alternative splicing events. Regulates NCOR2 alternative splicing. This Mus musculus (Mouse) protein is Muscleblind-like protein 1 (Mbnl1).